Reading from the N-terminus, the 503-residue chain is Ent-kaurene oxidase-like 5 (503 aa).

A helical membrane pass occupies residues 8-28 (GAGGIGVAAAAAVVAATLAVV). Cys-448 is a heme binding site.

This sequence belongs to the cytochrome P450 family. Requires heme as cofactor. As to expression, expressed in roots.

The protein localises to the membrane. Its function is as follows. May hydroxylate diterpenes. This chain is Ent-kaurene oxidase-like 5, found in Oryza sativa subsp. japonica (Rice).